A 300-amino-acid polypeptide reads, in one-letter code: Protein orai (300 aa).

Residues 1–128 (MPRSHDPSRV…SKAQLKASSR (128 aa)) are Cytoplasmic-facing. Positions 58–82 (QPPSSGGGSRNVGGGDGAAGNSKNG) are disordered. Residues 62-75 (SGGGSRNVGGGDGA) are compositionally biased toward gly residues. The helical transmembrane segment at 129 to 146 (TSALLAGFAMVCLVELQY) threads the bilayer. The Extracellular portion of the chain corresponds to 147-153 (DDSTSKP). Residues 154–174 (LLIVLGVVTSLLVSVHLLALM) form a helical membrane-spanning segment. Topologically, residues 175–205 (MSTCILPYMEATGCTQDSPHLKLKFYIDLSW) are cytoplasmic. A helical transmembrane segment spans residues 206–226 (LFSTCIGLLLFLVEIGVIFYV). Residues 227–237 (KFTAVGYPTAG) are Extracellular-facing. The chain crosses the membrane as a helical span at residues 238-258 (YITTAMLIPVGIVFVLFSYLI). The Cytoplasmic segment spans residues 259–300 (HKNRVSHSLGRFKDKVDTMKQFLDVEANLQKSTIAPSTIRDI).

It belongs to the Orai family.

It localises to the membrane. Ca(2+) release-activated Ca(2+)-like (CRAC-like) channel subunit which mediates Ca(2+) influx and increase in Ca(2+)-selective current by synergy with the Ca(2+) sensor, stim-1. Required for Ca(2+) and IP3-dependent contractile activity of sheath cells and the spermatheca. Affects brood size and somatic cell function. The protein is Protein orai (orai-1) of Caenorhabditis briggsae.